Reading from the N-terminus, the 271-residue chain is MTNLSGSMPSSTAADLQPALRVEGLGFYYGTKKVLEGVTMAIPVGKVTAMIGPSGCGKSTLLKAFNRIAELEGRVKVTGKIEFFGQNIYDQKVNINSLRREIGMVFQRPNPFPTSIYDNIVYGVKLCCNVSRAELDEIVERSLTRAVLWDEVKDSLKKSALGLSGGQQQRLCIARALAVNPKVLLMDEPCSALDPISTLKIEELINSLRENVTITIVTHNMQQALRVSDYTAFFNTDESRIGQLVEFDTTQNIFSSPQETQTRDYVAGRFG.

Positions 20–266 (LRVEGLGFYY…PQETQTRDYV (247 aa)) constitute an ABC transporter domain. Residue 52-59 (GPSGCGKS) participates in ATP binding.

It belongs to the ABC transporter superfamily. Phosphate importer (TC 3.A.1.7) family. The complex is composed of two ATP-binding proteins (PstB), two transmembrane proteins (PstC and PstA) and a solute-binding protein (PstS).

The protein localises to the cell inner membrane. The enzyme catalyses phosphate(out) + ATP + H2O = ADP + 2 phosphate(in) + H(+). Part of the ABC transporter complex PstSACB involved in phosphate import. Responsible for energy coupling to the transport system. The protein is Phosphate import ATP-binding protein PstB 3 of Synechocystis sp. (strain ATCC 27184 / PCC 6803 / Kazusa).